We begin with the raw amino-acid sequence, 178 residues long: Interleukin-10 (178 aa).

Positions 1–18 (MHSSALLCCLVLLTGVRA) are cleaved as a signal peptide. 2 disulfides stabilise this stretch: C30/C126 and C80/C132. N134 carries an N-linked (GlcNAc...) asparagine glycan.

This sequence belongs to the IL-10 family. Homodimer. Interacts with IL10RA and IL10RB.

It localises to the secreted. Its function is as follows. Major immune regulatory cytokine that acts on many cells of the immune system where it has profound anti-inflammatory functions, limiting excessive tissue disruption caused by inflammation. Mechanistically, IL10 binds to its heterotetrameric receptor comprising IL10RA and IL10RB leading to JAK1 and STAT2-mediated phosphorylation of STAT3. In turn, STAT3 translocates to the nucleus where it drives expression of anti-inflammatory mediators. Targets antigen-presenting cells (APCs) such as macrophages and monocytes and inhibits their release of pro-inflammatory cytokines including granulocyte-macrophage colony-stimulating factor /GM-CSF, granulocyte colony-stimulating factor/G-CSF, IL-1 alpha, IL-1 beta, IL-6, IL-8 and TNF-alpha. Also interferes with antigen presentation by reducing the expression of MHC-class II and co-stimulatory molecules, thereby inhibiting their ability to induce T cell activation. In addition, controls the inflammatory response of macrophages by reprogramming essential metabolic pathways including mTOR signaling. The protein is Interleukin-10 (IL10) of Macaca fascicularis (Crab-eating macaque).